Consider the following 698-residue polypeptide: SPX domain-containing membrane protein OsI_21475 (698 aa).

The SPX domain maps to 2–145 (VNFGKKLMAD…GYRFTDYYVT (144 aa)). A run of 6 helical transmembrane segments spans residues 248–268 (FMSL…TYII), 279–299 (LGAA…AQIF), 316–336 (LIFS…AYDM), 339–357 (LTVL…ARAV), 376–396 (AGFV…AGLL), and 412–432 (LPGW…WISF). The interval 467-495 (LLRDSSKKDEDDDEEVDDSEEGTHDSRKP) is disordered. Residues 476-486 (EDDDEEVDDSE) show a composition bias toward acidic residues. 5 consecutive transmembrane segments (helical) span residues 514 to 534 (LLIY…SSVI), 545 to 565 (AVAI…AVVG), 577 to 597 (LLMV…KITS), 605 to 625 (VVSA…NLSL), and 671 to 691 (LLNV…ASTF).

It belongs to the major facilitator superfamily.

It localises to the membrane. The polypeptide is SPX domain-containing membrane protein OsI_21475 (Oryza sativa subsp. indica (Rice)).